The chain runs to 77 residues: Acyl carrier protein (77 aa).

The 76-residue stretch at 1–76 (MSVEQRVKEI…DVLDYIKSKQ (76 aa)) folds into the Carrier domain. Residue S36 is modified to O-(pantetheine 4'-phosphoryl)serine.

The protein belongs to the acyl carrier protein (ACP) family. In terms of processing, 4'-phosphopantetheine is transferred from CoA to a specific serine of apo-ACP by AcpS. This modification is essential for activity because fatty acids are bound in thioester linkage to the sulfhydryl of the prosthetic group.

Its subcellular location is the cytoplasm. It participates in lipid metabolism; fatty acid biosynthesis. In terms of biological role, carrier of the growing fatty acid chain in fatty acid biosynthesis. The polypeptide is Acyl carrier protein (Sulfurihydrogenibium sp. (strain YO3AOP1)).